A 142-amino-acid polypeptide reads, in one-letter code: Large ribosomal subunit protein uL13 (142 aa).

Belongs to the universal ribosomal protein uL13 family. As to quaternary structure, part of the 50S ribosomal subunit.

Its function is as follows. This protein is one of the early assembly proteins of the 50S ribosomal subunit, although it is not seen to bind rRNA by itself. It is important during the early stages of 50S assembly. This Histophilus somni (Haemophilus somnus) protein is Large ribosomal subunit protein uL13.